Here is a 388-residue protein sequence, read N- to C-terminus: Arrestin-C (388 aa).

Belongs to the arrestin family. In terms of assembly, homodimer; disulfide-linked in response to retinal illumination. Interacts with CXCR4; the interaction is dependent on the C-terminal phosphorylation of CXCR4 and modulates the calcium ion mobilization activity of CXCR4. Interacts with GPR84. Inner and outer segments, and the inner plexiform regions of the retina.

It is found in the photoreceptor inner segment. The protein localises to the cell projection. Its subcellular location is the cilium. The protein resides in the photoreceptor outer segment. May play a role in an as yet undefined retina-specific signal transduction. Could bind to photoactivated-phosphorylated red/green opsins. The sequence is that of Arrestin-C (ARR3) from Homo sapiens (Human).